Reading from the N-terminus, the 353-residue chain is Chorismate synthase (353 aa).

NADP(+)-binding residues include R48 and R54. Residues R125 to S127, N238 to A239, G278, K293 to S297, and R319 contribute to the FMN site.

This sequence belongs to the chorismate synthase family. As to quaternary structure, homotetramer. FMNH2 is required as a cofactor.

The catalysed reaction is 5-O-(1-carboxyvinyl)-3-phosphoshikimate = chorismate + phosphate. It participates in metabolic intermediate biosynthesis; chorismate biosynthesis; chorismate from D-erythrose 4-phosphate and phosphoenolpyruvate: step 7/7. Functionally, catalyzes the anti-1,4-elimination of the C-3 phosphate and the C-6 proR hydrogen from 5-enolpyruvylshikimate-3-phosphate (EPSP) to yield chorismate, which is the branch point compound that serves as the starting substrate for the three terminal pathways of aromatic amino acid biosynthesis. This reaction introduces a second double bond into the aromatic ring system. The sequence is that of Chorismate synthase from Bordetella bronchiseptica (strain ATCC BAA-588 / NCTC 13252 / RB50) (Alcaligenes bronchisepticus).